Reading from the N-terminus, the 64-residue chain is Small cysteine-rich protein (64 aa).

A signal peptide spans 1 to 17 (FVCVQARQIDPEQILRT). The propeptide occupies 18-19 (PE).

In terms of processing, contains 4 disulfide bonds.

It localises to the secreted. Its subcellular location is the nematocyst. The sequence is that of Small cysteine-rich protein from Anemonia viridis (Snakelocks anemone).